A 338-amino-acid polypeptide reads, in one-letter code: tRNA N6-adenosine threonylcarbamoyltransferase (338 aa).

Fe cation is bound by residues His114 and His118. Substrate is bound by residues 136 to 140, Asp169, Gly182, Asp186, and Asn275; that span reads LVSGG. Position 301 (Asp301) interacts with Fe cation.

It belongs to the KAE1 / TsaD family. Requires Fe(2+) as cofactor.

The protein resides in the cytoplasm. The catalysed reaction is L-threonylcarbamoyladenylate + adenosine(37) in tRNA = N(6)-L-threonylcarbamoyladenosine(37) in tRNA + AMP + H(+). In terms of biological role, required for the formation of a threonylcarbamoyl group on adenosine at position 37 (t(6)A37) in tRNAs that read codons beginning with adenine. Is involved in the transfer of the threonylcarbamoyl moiety of threonylcarbamoyl-AMP (TC-AMP) to the N6 group of A37, together with TsaE and TsaB. TsaD likely plays a direct catalytic role in this reaction. This Streptococcus equi subsp. zooepidemicus (strain MGCS10565) protein is tRNA N6-adenosine threonylcarbamoyltransferase.